Here is a 404-residue protein sequence, read N- to C-terminus: RING-H2 finger protein ATL11 (404 aa).

Positions 1 to 36 (MNPKGRTNLNRSIIGGHDHGSILQLLLFLLLLSSHG) are cleaved as a signal peptide. The helical transmembrane segment at 64–84 (AILMIVLVSVFFFLGFFSVYI) threads the bilayer. Residues 144-186 (CSVCLNEFEDDETLRLIPKCCHVFHPGCIDAWLRSHTTCPLCR) form an RING-type; atypical zinc finger. Disordered regions lie at residues 339–361 (PYRT…VRAS) and 385–404 (VGEN…SNTV).

This sequence belongs to the RING-type zinc finger family. ATL subfamily.

It localises to the membrane. The enzyme catalyses S-ubiquitinyl-[E2 ubiquitin-conjugating enzyme]-L-cysteine + [acceptor protein]-L-lysine = [E2 ubiquitin-conjugating enzyme]-L-cysteine + N(6)-ubiquitinyl-[acceptor protein]-L-lysine.. Its pathway is protein modification; protein ubiquitination. The sequence is that of RING-H2 finger protein ATL11 (ATL11) from Arabidopsis thaliana (Mouse-ear cress).